Reading from the N-terminus, the 176-residue chain is Odorant-binding protein 2a (176 aa).

An N-terminal signal peptide occupies residues 1–19 (MKSLLLTILLLGLVAVLKA). N-linked (GlcNAc...) asparagine glycans are attached at residues asparagine 42 and asparagine 124. An intrachain disulfide couples cysteine 79 to cysteine 172.

It belongs to the calycin superfamily. Lipocalin family. Expressed in the liver (at protein level). Expressed in epididymis.

The protein localises to the secreted. Functionally, involved in the regulation of systematic glucose homeostasis and insulin sensitivity. Involved in the regulation of liver lipid levels by positive regulation of hepatic lipogenesis and negative regulation of fatty acid beta-oxidation; via downstream transcriptional regulation of CPT1A and hepatic lipogenic program gene expression. May regulate hepatic lipogenesis and fatty acid beta-oxidation in an autocrine or paracrine manner. This Mus musculus (Mouse) protein is Odorant-binding protein 2a (Obp2a).